Consider the following 467-residue polypeptide: Dihydroorotase (467 aa).

The Zn(2+) site is built by His-60 and His-62. Residues 62 to 64 (HFR) and Asn-94 each bind substrate. Glu-146, His-180, His-234, and Asp-313 together coordinate Zn(2+). Asp-313 is a catalytic residue. Substrate is bound at residue His-317. A disordered region spans residues 439–467 (KPGRGEFLEGSGKRSEEDEEENSEETGSD). The span at 441 to 454 (GRGEFLEGSGKRSE) shows a compositional bias: basic and acidic residues. The segment covering 455–467 (EDEEENSEETGSD) has biased composition (acidic residues).

The protein belongs to the metallo-dependent hydrolases superfamily. DHOase family. Class I DHOase subfamily. Zn(2+) serves as cofactor.

The enzyme catalyses (S)-dihydroorotate + H2O = N-carbamoyl-L-aspartate + H(+). It participates in pyrimidine metabolism; UMP biosynthesis via de novo pathway; (S)-dihydroorotate from bicarbonate: step 3/3. Catalyzes the reversible cyclization of carbamoyl aspartate to dihydroorotate. This chain is Dihydroorotase, found in Methanosarcina acetivorans (strain ATCC 35395 / DSM 2834 / JCM 12185 / C2A).